Here is a 499-residue protein sequence, read N- to C-terminus: Lysine--tRNA ligase (499 aa).

Positions 408 and 415 each coordinate Mg(2+).

Belongs to the class-II aminoacyl-tRNA synthetase family. In terms of assembly, homodimer. Mg(2+) serves as cofactor.

The protein localises to the cytoplasm. It catalyses the reaction tRNA(Lys) + L-lysine + ATP = L-lysyl-tRNA(Lys) + AMP + diphosphate. The chain is Lysine--tRNA ligase from Bacillus mycoides (strain KBAB4) (Bacillus weihenstephanensis).